A 248-amino-acid chain; its full sequence is Sugar fermentation stimulation protein homolog (248 aa).

Belongs to the SfsA family.

The chain is Sugar fermentation stimulation protein homolog from Methylorubrum extorquens (strain PA1) (Methylobacterium extorquens).